The chain runs to 114 residues: UPF0145 protein SSO1976 (114 aa).

This sequence belongs to the UPF0145 family.

This Saccharolobus solfataricus (strain ATCC 35092 / DSM 1617 / JCM 11322 / P2) (Sulfolobus solfataricus) protein is UPF0145 protein SSO1976.